We begin with the raw amino-acid sequence, 80 residues long: uncharacterized protein (80 aa).

This is an uncharacterized protein from Synechococcus sp. (strain PCC 6716).